A 146-amino-acid polypeptide reads, in one-letter code: 3-dehydroquinate dehydratase (146 aa).

Tyrosine 22 (proton acceptor) is an active-site residue. Substrate-binding residues include asparagine 73, histidine 79, and aspartate 86. The active-site Proton donor is the histidine 99. Substrate contacts are provided by residues 100-101 (LS) and arginine 110.

The protein belongs to the type-II 3-dehydroquinase family. In terms of assembly, homododecamer.

It catalyses the reaction 3-dehydroquinate = 3-dehydroshikimate + H2O. The protein operates within metabolic intermediate biosynthesis; chorismate biosynthesis; chorismate from D-erythrose 4-phosphate and phosphoenolpyruvate: step 3/7. In terms of biological role, catalyzes a trans-dehydration via an enolate intermediate. The protein is 3-dehydroquinate dehydratase of Synechococcus sp. (strain CC9605).